A 394-amino-acid chain; its full sequence is Probable purine permease 23 (394 aa).

The span at 1–20 shows a compositional bias: basic and acidic residues; that stretch reads MEMTEASKHTTTHEESEHVQ. A disordered region spans residues 1 to 24; the sequence is MEMTEASKHTTTHEESEHVQNPEP. The residue at position 29 (Ser-29) is a Phosphoserine. The next 10 membrane-spanning stretches (helical) occupy residues 43–63, 85–105, 124–144, 152–172, 180–200, 211–231, 254–274, 301–321, 328–348, and 352–372; these read ISVL…ILLL, WMQA…FFIF, LILL…LYAL, GFFM…TAII, WIII…PVFS, GIQA…LCLV, VLEM…VGLF, VGLA…VLYV, IVHM…FDFI, and FSWP…SYFY.

This sequence belongs to the purine permeases (TC 2.A.7.14) family.

It localises to the membrane. This chain is Probable purine permease 23 (PUP23), found in Arabidopsis thaliana (Mouse-ear cress).